The sequence spans 432 residues: Adenylosuccinate synthetase (432 aa).

Residues 13 to 19 (GDEGKGK) and 41 to 43 (GHT) each bind GTP. D14 acts as the Proton acceptor in catalysis. Mg(2+) is bound by residues D14 and G41. Residues 14 to 17 (DEGK), 39 to 42 (NAGH), T130, R144, Q225, T240, and R304 each bind IMP. H42 (proton donor) is an active-site residue. Substrate is bound at residue 300–306 (ATTGRSR). Residues R306, 332–334 (KLD), and 415–417 (STG) each bind GTP.

Belongs to the adenylosuccinate synthetase family. As to quaternary structure, homodimer. Mg(2+) is required as a cofactor.

The protein resides in the cytoplasm. It catalyses the reaction IMP + L-aspartate + GTP = N(6)-(1,2-dicarboxyethyl)-AMP + GDP + phosphate + 2 H(+). It participates in purine metabolism; AMP biosynthesis via de novo pathway; AMP from IMP: step 1/2. Plays an important role in the de novo pathway of purine nucleotide biosynthesis. Catalyzes the first committed step in the biosynthesis of AMP from IMP. The polypeptide is Adenylosuccinate synthetase (Proteus mirabilis (strain HI4320)).